The following is a 150-amino-acid chain: Propanediol utilization protein PduV (150 aa).

The tract at residues 1 to 42 is targets protein to the BMC; the sequence is MKRIMLIGPSQCGKTSLTQCMRGEALHYQKTQAIVWSPTTID. 8 to 15 is a binding site for GTP; the sequence is GPSQCGKT.

The protein belongs to the EutP/PduV family. In terms of assembly, interacts with PduU, probably via the PduU beta-barrel which is predicted by modeling to be on the exterior of the BMC.

It localises to the bacterial microcompartment. The protein operates within polyol metabolism; 1,2-propanediol degradation. Functionally, may play a role in the spatial distribution of the bacterial microcompartment (BMC) dedicated to 1,2-PD degradation, perhaps being involved in cytoskeleton dynamics; might bind GTP. This subunit is directly targeted to the BMC. Its function is as follows. Expression of a cosmid containing the full 21-gene pdu operon in E.coli allows E.coli to grow on 1,2-propanediol (1,2-PD) with the appearance of bacterial microcompartments (BMC) in its cytoplasm. In terms of biological role, the 1,2-PD-specific bacterial microcompartment (BMC) concentrates low levels of 1,2-PD catabolic enzymes, concentrates volatile reaction intermediates thus enhancing pathway flux and keeps the level of toxic, mutagenic propionaldehyde low. The sequence is that of Propanediol utilization protein PduV from Citrobacter freundii.